Consider the following 197-residue polypeptide: Protein jagunal (197 aa).

Residues 1-39 (MATRGGPMVAGTDGNDFEFRQRVAGTYQISLLNKSRLKY) are Cytoplasmic-facing. Residues 40–60 (CIFFHALLFFVMLAKLTSDIL) form a helical membrane-spanning segment. Residues 61-78 (DRLDIFVLEIEELEVPSP) lie on the Lumenal side of the membrane. The chain crosses the membrane as a helical span at residues 79–99 (LWWEYVWAGSLLTSFLGLSAA). The Cytoplasmic portion of the chain corresponds to 100 to 109 (RGNKVREMQK). Residues 110 to 130 (YMIAILVFAILPLLYCFAYYF) traverse the membrane as a helical segment. The Lumenal segment spans residues 131-159 (SDVWEFATMDKSVELDETDIFIWRGYPYG). The helical transmembrane segment at 160–180 (VFWYAFCFVGFQVHGFTLYFA) threads the bilayer. Residues 181 to 197 (YNLVKVWKARTATRKFQ) are Cytoplasmic-facing.

The protein belongs to the jagunal family.

Its subcellular location is the endoplasmic reticulum membrane. In terms of biological role, required for endoplasmic reticulum organization and proper vesicular traffic during vitellogenesis. Required for oocyte and bristle growth. The sequence is that of Protein jagunal from Drosophila pseudoobscura pseudoobscura (Fruit fly).